The chain runs to 456 residues: Equilibrative nucleoside transporter 2 (456 aa).

The chain crosses the membrane as a helical span at residues L13–I33. Residue N56 is glycosylated (N-linked (GlcNAc...) asparagine). Transmembrane regions (helical) follow at residues W69–Y89, I98–V118, G123–L143, L161–L181, and L192–L212. Positions G248–G277 are disordered. S252 carries the phosphoserine modification. Residues D263 to K275 are compositionally biased toward basic and acidic residues. The next 5 membrane-spanning stretches (helical) occupy residues I288–A308, W323–G343, L360–V380, F396–C416, and A432–F452.

The protein belongs to the SLC29A/ENT transporter (TC 2.A.57) family.

It localises to the apical cell membrane. It is found in the basolateral cell membrane. The protein resides in the nucleus membrane. The enzyme catalyses inosine(in) = inosine(out). It carries out the reaction adenosine(in) = adenosine(out). It catalyses the reaction uridine(out) = uridine(in). The catalysed reaction is thymidine(in) = thymidine(out). The enzyme catalyses hypoxanthine(out) = hypoxanthine(in). It carries out the reaction adenine(out) = adenine(in). It catalyses the reaction cytidine(in) = cytidine(out). The catalysed reaction is thymine(out) = thymine(in). The enzyme catalyses uracil(in) = uracil(out). It carries out the reaction guanine(out) = guanine(in). It catalyses the reaction guanosine(in) = guanosine(out). Its function is as follows. Bidirectional uniporter involved in the facilitative transport of nucleosides and nucleobases, and contributes to maintaining their cellular homeostasis. Functions as a Na(+)-independent, passive transporter. Involved in the transport of nucleosides such as inosine, adenosine, uridine, thymidine, cytidine and guanosine. Also able to transport purine nucleobases (hypoxanthine, adenine, guanine) and pyrimidine nucleobases (thymine, uracil). Involved in nucleoside transport at basolateral membrane of kidney cells, allowing liver absorption of nucleoside metabolites. Mediates apical nucleoside uptake into Sertoli cells, thereby regulating the transport of nucleosides in testis across the blood-testis-barrier. Mediates both the influx and efflux of hypoxanthine in skeletal muscle microvascular endothelial cells to control the amount of intracellular hypoxanthine available for xanthine oxidase-mediated ROS production. The chain is Equilibrative nucleoside transporter 2 from Mus musculus (Mouse).